A 316-amino-acid polypeptide reads, in one-letter code: Thymidylate synthase (316 aa).

DUMP-binding positions include Arg-23 and 178–179 (RR). Residue Cys-198 is the Nucleophile of the active site. Residues 218–221 (RSGD), Asn-229, and 259–261 (HIY) contribute to the dUMP site. Asp-221 contacts (6R)-5,10-methylene-5,6,7,8-tetrahydrofolate. Ala-315 contacts (6R)-5,10-methylene-5,6,7,8-tetrahydrofolate.

Belongs to the thymidylate synthase family. Bacterial-type ThyA subfamily. As to quaternary structure, homodimer.

Its subcellular location is the cytoplasm. It carries out the reaction dUMP + (6R)-5,10-methylene-5,6,7,8-tetrahydrofolate = 7,8-dihydrofolate + dTMP. The protein operates within pyrimidine metabolism; dTTP biosynthesis. Its function is as follows. Catalyzes the reductive methylation of 2'-deoxyuridine-5'-monophosphate (dUMP) to 2'-deoxythymidine-5'-monophosphate (dTMP) while utilizing 5,10-methylenetetrahydrofolate (mTHF) as the methyl donor and reductant in the reaction, yielding dihydrofolate (DHF) as a by-product. This enzymatic reaction provides an intracellular de novo source of dTMP, an essential precursor for DNA biosynthesis. The chain is Thymidylate synthase from Latilactobacillus sakei subsp. sakei (strain 23K) (Lactobacillus sakei subsp. sakei).